A 118-amino-acid polypeptide reads, in one-letter code: Peptidyl-tRNA hydrolase (118 aa).

It belongs to the PTH2 family.

The protein resides in the cytoplasm. The enzyme catalyses an N-acyl-L-alpha-aminoacyl-tRNA + H2O = an N-acyl-L-amino acid + a tRNA + H(+). Functionally, the natural substrate for this enzyme may be peptidyl-tRNAs which drop off the ribosome during protein synthesis. This is Peptidyl-tRNA hydrolase from Thermococcus sibiricus (strain DSM 12597 / MM 739).